The following is a 370-amino-acid chain: A-type ATP synthase subunit C (370 aa).

Belongs to the V-ATPase V0D/AC39 subunit family. Has multiple subunits with at least A(3), B(3), C, D, E, F, H, I and proteolipid K(x).

Its subcellular location is the cell membrane. Functionally, component of the A-type ATP synthase that produces ATP from ADP in the presence of a proton gradient across the membrane. The chain is A-type ATP synthase subunit C from Pyrococcus horikoshii (strain ATCC 700860 / DSM 12428 / JCM 9974 / NBRC 100139 / OT-3).